The primary structure comprises 268 residues: Small ribosomal subunit protein eS1 (268 aa).

Positions 1–21 (MAVGKNKGLSKGGKKGGKKKV) are disordered.

It belongs to the eukaryotic ribosomal protein eS1 family. Component of the small ribosomal subunit. Mature ribosomes consist of a small (40S) and a large (60S) subunit. The 40S subunit contains about 33 different proteins and 1 molecule of RNA (18S). The 60S subunit contains about 49 different proteins and 3 molecules of RNA (28S, 5.8S and 5S).

Its subcellular location is the cytoplasm. Essential for oogenesis; required for late follicle cell development. This chain is Small ribosomal subunit protein eS1, found in Drosophila persimilis (Fruit fly).